A 326-amino-acid chain; its full sequence is Aspartate carbamoyltransferase catalytic subunit (326 aa).

Carbamoyl phosphate contacts are provided by Arg76 and Thr77. Lys104 provides a ligand contact to L-aspartate. Positions 126, 156, and 159 each coordinate carbamoyl phosphate. Positions 189 and 244 each coordinate L-aspartate. 2 residues coordinate carbamoyl phosphate: Gly285 and Pro286.

The protein belongs to the aspartate/ornithine carbamoyltransferase superfamily. ATCase family. Heterododecamer (2C3:3R2) of six catalytic PyrB chains organized as two trimers (C3), and six regulatory PyrI chains organized as three dimers (R2).

It carries out the reaction carbamoyl phosphate + L-aspartate = N-carbamoyl-L-aspartate + phosphate + H(+). The protein operates within pyrimidine metabolism; UMP biosynthesis via de novo pathway; (S)-dihydroorotate from bicarbonate: step 2/3. Functionally, catalyzes the condensation of carbamoyl phosphate and aspartate to form carbamoyl aspartate and inorganic phosphate, the committed step in the de novo pyrimidine nucleotide biosynthesis pathway. In Polynucleobacter asymbioticus (strain DSM 18221 / CIP 109841 / QLW-P1DMWA-1) (Polynucleobacter necessarius subsp. asymbioticus), this protein is Aspartate carbamoyltransferase catalytic subunit.